A 168-amino-acid chain; its full sequence is Probable chemoreceptor glutamine deamidase CheD (168 aa).

The protein belongs to the CheD family.

It carries out the reaction L-glutaminyl-[protein] + H2O = L-glutamyl-[protein] + NH4(+). In terms of biological role, probably deamidates glutamine residues to glutamate on methyl-accepting chemotaxis receptors (MCPs), playing an important role in chemotaxis. This Pseudomonas syringae pv. tomato (strain ATCC BAA-871 / DC3000) protein is Probable chemoreceptor glutamine deamidase CheD.